The following is a 72-amino-acid chain: Large ribosomal subunit protein bL31 (72 aa).

Zn(2+) is bound by residues Cys16, Cys18, Cys38, and Cys41.

Belongs to the bacterial ribosomal protein bL31 family. Type A subfamily. In terms of assembly, part of the 50S ribosomal subunit. The cofactor is Zn(2+).

Its function is as follows. Binds the 23S rRNA. In Vibrio campbellii (strain ATCC BAA-1116), this protein is Large ribosomal subunit protein bL31.